A 210-amino-acid chain; its full sequence is ATP-dependent dethiobiotin synthetase BioD (210 aa).

ATP is bound at residue 13 to 18 (DVGKTV). Threonine 17 contributes to the Mg(2+) binding site. The active site involves lysine 33. The Mg(2+) site is built by arginine 47 and glutamate 101. Residues 101–104 (EGAG) and 185–187 (PPL) each bind ATP.

It belongs to the dethiobiotin synthetase family. In terms of assembly, homodimer. Mg(2+) serves as cofactor.

It is found in the cytoplasm. It catalyses the reaction (7R,8S)-7,8-diammoniononanoate + CO2 + ATP = (4R,5S)-dethiobiotin + ADP + phosphate + 3 H(+). The protein operates within cofactor biosynthesis; biotin biosynthesis; biotin from 7,8-diaminononanoate: step 1/2. Functionally, catalyzes a mechanistically unusual reaction, the ATP-dependent insertion of CO2 between the N7 and N8 nitrogen atoms of 7,8-diaminopelargonic acid (DAPA, also called 7,8-diammoniononanoate) to form a ureido ring. In Afipia carboxidovorans (strain ATCC 49405 / DSM 1227 / KCTC 32145 / OM5) (Oligotropha carboxidovorans), this protein is ATP-dependent dethiobiotin synthetase BioD.